Reading from the N-terminus, the 361-residue chain is 3-dehydroquinate synthase (361 aa).

NAD(+) contacts are provided by residues 70-75 (DGEQHK), 104-108 (GVVGD), 128-129 (TT), Lys141, and Lys150. Zn(2+) contacts are provided by Glu183, His246, and His263.

Belongs to the sugar phosphate cyclases superfamily. Dehydroquinate synthase family. It depends on Co(2+) as a cofactor. Requires Zn(2+) as cofactor. The cofactor is NAD(+).

It localises to the cytoplasm. The enzyme catalyses 7-phospho-2-dehydro-3-deoxy-D-arabino-heptonate = 3-dehydroquinate + phosphate. It functions in the pathway metabolic intermediate biosynthesis; chorismate biosynthesis; chorismate from D-erythrose 4-phosphate and phosphoenolpyruvate: step 2/7. Catalyzes the conversion of 3-deoxy-D-arabino-heptulosonate 7-phosphate (DAHP) to dehydroquinate (DHQ). The polypeptide is 3-dehydroquinate synthase (Teredinibacter turnerae (strain ATCC 39867 / T7901)).